The primary structure comprises 285 residues: HTH-type transcriptional regulator MurR (285 aa).

Residues 1–77 enclose the HTH rpiR-type domain; sequence MLYLTKIRNA…MALIGEYSAS (77 aa). The H-T-H motif DNA-binding region spans 37 to 56; it reads SRKMAKQLGISQSSIVKFAQ. The SIS domain maps to 128–268; the sequence is IIEVISKAPF…FVGLVQLNDV (141 aa).

Homotetramer.

Its pathway is amino-sugar metabolism; N-acetylmuramate degradation [regulation]. In terms of biological role, represses the expression of the murPQ operon involved in the uptake and degradation of N-acetylmuramic acid (MurNAc). Binds to two adjacent inverted repeats within the operator region. MurNAc 6-phosphate, the substrate of MurQ, is the specific inducer that weakens binding of MurR to the operator. The sequence is that of HTH-type transcriptional regulator MurR from Shigella sonnei (strain Ss046).